The chain runs to 337 residues: Holliday junction branch migration complex subunit RuvB (337 aa).

The segment at Ala-4–Tyr-184 is large ATPase domain (RuvB-L). Residues Ile-23, Arg-24, Gly-65, Lys-68, Thr-69, Thr-70, Glu-131–Tyr-133, Arg-174, Tyr-184, and Arg-221 each bind ATP. A Mg(2+)-binding site is contributed by Thr-69. The segment at Lys-185–Asp-255 is small ATPAse domain (RuvB-S). The interval Asn-258 to Gly-337 is head domain (RuvB-H). Residues Arg-313 and Arg-318 each coordinate DNA.

Belongs to the RuvB family. In terms of assembly, homohexamer. Forms an RuvA(8)-RuvB(12)-Holliday junction (HJ) complex. HJ DNA is sandwiched between 2 RuvA tetramers; dsDNA enters through RuvA and exits via RuvB. An RuvB hexamer assembles on each DNA strand where it exits the tetramer. Each RuvB hexamer is contacted by two RuvA subunits (via domain III) on 2 adjacent RuvB subunits; this complex drives branch migration. In the full resolvosome a probable DNA-RuvA(4)-RuvB(12)-RuvC(2) complex forms which resolves the HJ.

The protein localises to the cytoplasm. It carries out the reaction ATP + H2O = ADP + phosphate + H(+). Functionally, the RuvA-RuvB-RuvC complex processes Holliday junction (HJ) DNA during genetic recombination and DNA repair, while the RuvA-RuvB complex plays an important role in the rescue of blocked DNA replication forks via replication fork reversal (RFR). RuvA specifically binds to HJ cruciform DNA, conferring on it an open structure. The RuvB hexamer acts as an ATP-dependent pump, pulling dsDNA into and through the RuvAB complex. RuvB forms 2 homohexamers on either side of HJ DNA bound by 1 or 2 RuvA tetramers; 4 subunits per hexamer contact DNA at a time. Coordinated motions by a converter formed by DNA-disengaged RuvB subunits stimulates ATP hydrolysis and nucleotide exchange. Immobilization of the converter enables RuvB to convert the ATP-contained energy into a lever motion, pulling 2 nucleotides of DNA out of the RuvA tetramer per ATP hydrolyzed, thus driving DNA branch migration. The RuvB motors rotate together with the DNA substrate, which together with the progressing nucleotide cycle form the mechanistic basis for DNA recombination by continuous HJ branch migration. Branch migration allows RuvC to scan DNA until it finds its consensus sequence, where it cleaves and resolves cruciform DNA. This Tolumonas auensis (strain DSM 9187 / NBRC 110442 / TA 4) protein is Holliday junction branch migration complex subunit RuvB.